We begin with the raw amino-acid sequence, 714 residues long: Protein spire homolog 2 (714 aa).

Residues 22 to 203 (LSLEEVLKAY…RALFVETLEL (182 aa)) enclose the KIND domain. The interval 136-162 (DSEDSGCGAADEGYGGPEEEEEAEGVP) is disordered. 3 consecutive WH2 domains span residues 248-262 (QLMR…LKKV), 278-296 (PFEM…LRKV), and 342-359 (LHEK…LRPV). Residues Ser371, Ser440, Ser442, and Ser476 each carry the phosphoserine modification. The disordered stretch occupies residues 453-516 (VASGLQSATH…SSGDRPEASM (64 aa)). Positions 486-496 (DQGTCPASVSD) are enriched in polar residues. The interval 534–554 (LALTVEEVMDVRRVLVKAEME) is spir-box.

The protein belongs to the spire family.

The protein localises to the cytoplasm. It localises to the cytoskeleton. It is found in the cytosol. The protein resides in the cell membrane. Its subcellular location is the cytoplasmic vesicle membrane. Functionally, acts as an actin nucleation factor, remains associated with the slow-growing pointed end of the new filament. Involved in intracellular vesicle transport along actin fibers, providing a novel link between actin cytoskeleton dynamics and intracellular transport. Required for asymmetric spindle positioning and asymmetric cell division during meiosis. Required for normal formation of the cleavage furrow and for polar body extrusion during female germ cell meiosis. Also acts in the nucleus: together with SPIRE1 and SPIRE2, promotes assembly of nuclear actin filaments in response to DNA damage in order to facilitate movement of chromatin and repair factors after DNA damage. This Homo sapiens (Human) protein is Protein spire homolog 2 (SPIRE2).